The following is a 39-amino-acid chain: Photosystem II reaction center protein L (39 aa).

A helical transmembrane segment spans residues Ser-18–Phe-38.

This sequence belongs to the PsbL family. As to quaternary structure, PSII is composed of 1 copy each of membrane proteins PsbA, PsbB, PsbC, PsbD, PsbE, PsbF, PsbH, PsbI, PsbJ, PsbK, PsbL, PsbM, PsbT, PsbX, PsbY, Psb30/Ycf12, peripheral proteins PsbO, CyanoQ (PsbQ), PsbU, PsbV and a large number of cofactors. It forms dimeric complexes.

The protein resides in the cellular thylakoid membrane. In terms of biological role, one of the components of the core complex of photosystem II (PSII). PSII is a light-driven water:plastoquinone oxidoreductase that uses light energy to abstract electrons from H(2)O, generating O(2) and a proton gradient subsequently used for ATP formation. It consists of a core antenna complex that captures photons, and an electron transfer chain that converts photonic excitation into a charge separation. This subunit is found at the monomer-monomer interface and is required for correct PSII assembly and/or dimerization. This is Photosystem II reaction center protein L from Prochlorococcus marinus (strain NATL2A).